The primary structure comprises 2596 residues: Cadherin EGF LAG seven-pass G-type receptor fmi-1 (2596 aa).

The N-terminal stretch at M1–S22 is a signal peptide. Residues E23–M2229 are Extracellular-facing. 8 Cadherin domains span residues Q166–F270, E271–F375, A376–L479, I480–F581, D582–F682, N683–F784, T785–F892, and E893–L1000. Residues N381, N387, N562, N587, N765, and N824 are each glycosylated (N-linked (GlcNAc...) asparagine). N-linked (GlcNAc...) asparagine glycosylation is found at N1030 and N1263. The region spanning R1251–E1287 is the EGF-like 1 domain. Intrachain disulfides connect C1255–C1266, C1260–C1275, C1277–C1286, C1497–C1526, C1533–C1546, C1540–C1555, C1557–C1567, C1709–C1732, C1738–C1750, C1744–C1759, C1761–C1770, and C1780–C1785. The Laminin G-like 1 domain maps to S1333–C1526. Residues R1529–V1568 form the EGF-like 2 domain. Residues R1577–C1732 form the Laminin G-like 2 domain. EGF-like domains are found at residues V1734–L1771 and V1776–Q1808. N-linked (GlcNAc...) asparagine glycosylation occurs at N1789. The cysteines at positions 1798 and 1807 are disulfide-linked. N1965, N1992, N2152, N2195, and N2228 each carry an N-linked (GlcNAc...) asparagine glycan. The GAIN-B domain maps to E2054–S2219. The cysteines at positions 2174 and 2201 are disulfide-linked. Positions C2174 to S2219 are GPS. The chain crosses the membrane as a helical span at residues T2230–L2250. Residues S2251–R2261 are Cytoplasmic-facing. The chain crosses the membrane as a helical span at residues I2262–A2282. At I2283–N2292 the chain is on the extracellular side. The chain crosses the membrane as a helical span at residues A2293 to I2313. Residues Y2314–L2326 lie on the Cytoplasmic side of the membrane. Residues T2327–V2347 form a helical membrane-spanning segment. The Extracellular portion of the chain corresponds to T2348–H2356. The helical transmembrane segment at L2357–A2377 threads the bilayer. The Cytoplasmic portion of the chain corresponds to A2378–R2401. The helical transmembrane segment at A2402 to F2422 threads the bilayer. At A2423–Q2437 the chain is on the extracellular side. A helical membrane pass occupies residues S2438 to T2458. At K2459–E2596 the chain is on the cytoplasmic side.

Belongs to the G-protein coupled receptor 2 family. LN-TM7 subfamily. In terms of tissue distribution, expressed in a region of neuropil around the nerve ring and the ventral cord (at protein level). Expressed in the head, tail, ventral cord, nerve ring and neurons including HSN neurons. Expressed in DA, VA, and VB and weakly in the DB cholinergic neurons. Not expressed in ventral D-type GABAergic motorneurons.

Its subcellular location is the cell membrane. It localises to the cell projection. It is found in the axon. The protein resides in the dendrite. Functionally, during ventral cord development, required for axon fasciculation and navigation, mediating both pioneer and follower axon extension, guidance and track formation. Acts in CEPsh glia and SubL neurons to guide follower axons into the nerve ring. Promotes motorneuron development by positively regulating the extension of the anterior neurite of ventral D-type GABAergic motorneurons along the anterior-posterior axis of the ventral nerve cord. Plays a role in synaptogenesis by regulating synaptic vesicle accumulation at GABAergic and cholinergic neuromuscular junctions. This is Cadherin EGF LAG seven-pass G-type receptor fmi-1 from Caenorhabditis elegans.